The following is a 411-amino-acid chain: Immunity-related GTPase family M protein (411 aa).

The interval 1-21 (MKPSHKSCEAAPLLPKMPETS) is disordered. One can recognise an IRG-type G domain in the interval 77 to 253 (IPVSIFVTGD…PELRNTLQTD (177 aa)). GTP-binding positions include 86 to 93 (DSGNGMSS), 111 to 115 (TGVVR), and 193 to 195 (KLD). Ser-204 carries the post-translational modification Phosphoserine. 234-236 (SNL) contacts GTP. Lys-272 participates in a covalent cross-link: Glycyl lysine isopeptide (Lys-Gly) (interchain with G-Cter in ubiquitin). An alpha-K amphipathic helix region spans residues 352-376 (KLRLMTCTTVNALFCLFKFLPCLCH).

The protein belongs to the TRAFAC class dynamin-like GTPase superfamily. IRG family. In terms of assembly, interacts with ULK1; promoting the coassembly of ULK1 and BECN1. Interacts with BECN1; enhancing BECN1-interacting partners and influencing the composition of the BECN1 complex. Interacts with ATG16L1. Interacts with NOD2; promoting Irgm 'Lys-63'-linked polyubiquitination, which is required for interactions with the core autophagy factors. Interacts with STX17; promoting STX17 recruitment to autophagosomes. Interacts with ATG8 proteins (GABARAP, GABARAPL1, GABARAPL2, MAP1LC3A, MAP1LC3B and MAP1LC3C); promoting STX17 recruitment to autophagosomes. Interacts with TFEB; promoting association between TFEB and PPP3CB and TFEB dephosphorylation. Interacts with PPP3CB; promoting association between TFEB and PPP3CB and TFEB dephosphorylation. Interacts with NLRP3; preventing NLRP3 inflammasome assembly and promoting SQSTM1/p62-dependent autophagic degradation of NLRP3. Interacts with CGAS; promoting SQSTM1/p62-dependent autophagic degradation of CGAS. Interacts with RIGI/RIG-I; promoting SQSTM1/p62-dependent autophagic degradation of RIGI/RIG-I. Interacts with NOD1; promoting SQSTM1/p62-dependent autophagic degradation of RIGI/RIG-I. Interacts with NOD2; promoting SQSTM1/p62-dependent autophagic degradation of RIGI/RIG-I. Interacts with RIPK2; promoting SQSTM1/p62-dependent autophagic degradation of RIGI/RIG-I. Interacts with PIK3CA. Palmitoylated on C-terminal Cys residues. Palmitoylation, together with the alpha-K amphipathic helix, which binds phosphatidylinositol, mediate binding to membranes. In terms of processing, ubiquitinated via 'Lys-63'-linked polyubiquitination in a NOD2-dependent process. 'Lys-63'-linked polyubiquitination is required for interactions with the core autophagy factors. Ubiquitination at Lys-272 by the DCX(WDR77) complex, also named CLR4(WDR77) complex, in intestinal cells, leading to its degradation by the proteasome.

The protein localises to the golgi apparatus membrane. It is found in the cell membrane. The protein resides in the cytoplasmic vesicle. It localises to the phagosome membrane. Its subcellular location is the autophagosome membrane. The protein localises to the lysosome membrane. It is found in the late endosome membrane. The protein resides in the mitochondrion membrane. It localises to the cell projection. Its subcellular location is the phagocytic cup. It catalyses the reaction GTP + H2O = GDP + phosphate + H(+). In terms of biological role, immunity-related GTPase that plays important roles in innate immunity and inflammatory response. Acts as a dynamin-like protein that binds to intracellular membranes and promotes remodeling and trafficking of those membranes. Required for clearance of acute protozoan and bacterial infections by interacting with autophagy and lysosome regulatory proteins, thereby promoting the fusion of phagosomes with lysosomes for efficient degradation of cargo including microbes. Regulates selective autophagy, including xenophagy and mitophagy, both directly and indirectly. Directly regulates autophagy by acting as a molecular adapter that promotes the coassembly of the core autophagy machinery to mediate antimicrobial defense: Irgm (1) activates AMPK, which in turn phosphorylates ULK1 and BECN1 to induce autophagy, (2) promotes the coassembly of ULK1 and BECN1, enhancing BECN1-interacting partners and (3) influences the composition of the BECN1 complex, by competing with the negative regulators BCL2 and RUBCN, to trigger autophagy. Also activates autophagy by promoting recruitment of STX17 to autophagosomes. In collaboration with ATG8 proteins, regulate lysosomal biogenesis, a fundamental process for any autophagic pathway, by promoting TFEB dephosphorylation. Also modulates autophagy by assisting with autophagosome formation and preventing lysosomal deacidification. Regulates autophagy by affecting mitochondrial fusion and fission. Also involved in M1 macrophage activation for the production of proinflammatory cytokines. While activating autophagy, acts as a key negative regulator of the inflammatory and interferon responses both by (1) promoting mitophagy and (2) mediating autophagy-dependent degradation of effectors of the inflammatory response. Promotes degradation of damaged and IFNG/IFN-gamma-stressed mitochondria via mitophagy, preventing cytosolic release of ligands that activate inflammation. Negatively regulates interferon-signaling in hematopoietic stem cells, preserving hematopoietic stem cell number and function. Promotes expansion of activated CD4(+) T-cells by inhibiting IFNG/IFN-gamma signaling, thereby preventing Ifng-mediated cell death of CD4(+) T-cells. Acts as a suppressor of inflammation by promoting recruitment of inflammation effectors, such as CGAS, RIGI/RIG-I and NLRP3, to autophagosome membranes, leading to their SQSTM1/p62-dependent autophagic degradation. Also directly inhibits assembly of the NLRP3 inflammasome by preventing the association between NLRP3 and PYCARD. Acts as a negative regulator of antiviral innate immune response by suppressing the RIPK2-dependent pro-inflammatory response: mediates recruitment of RIPosomes, composed of RIPK2 and NOD1 or NOD2, to autophagosome membranes, promoting their SQSTM1/p62-dependent autophagic degradation. This chain is Immunity-related GTPase family M protein, found in Rattus norvegicus (Rat).